Reading from the N-terminus, the 132-residue chain is Small ribosomal subunit protein uS8 (132 aa).

The protein belongs to the universal ribosomal protein uS8 family. In terms of assembly, part of the 30S ribosomal subunit. Contacts proteins S5 and S12.

Functionally, one of the primary rRNA binding proteins, it binds directly to 16S rRNA central domain where it helps coordinate assembly of the platform of the 30S subunit. This Lactobacillus acidophilus (strain ATCC 700396 / NCK56 / N2 / NCFM) protein is Small ribosomal subunit protein uS8.